The chain runs to 529 residues: MTLSPYLQEVAKRRTFAIISHPDAGKTTITEKVLLFGQAIQTAGTVKGRGSSQHAKSDWMEMEKQRGISITTSVMQFPYHDCLVNLLDTPGHEDFSEDTYRTLTAVDCCLMVIDAAKGVEDRTRKLMEVTRLRDTPILTFMNKLDRDIRDPMELLDEVENELKIGCAPITWPIGCGKLFKGVYHLYKDETYLYQTGKGHTIQEVRIVKGLNNPDLDAAVGEDLAQQLRDELELVQGASNEFDEELFLAGEITPVFFGTALGNFGVDHMLDGLVAWAPAPMPRQTDTRTVEASEEKFTGFVFKIQANMDPKHRDRVAFMRVVSGKYEKGMKLRQVRIGKDVVISDALTFMAGDRSHVEEAYPGDILGLHNHGTIQIGDTFTQGEMMKFTGIPNFAPELFRRIRLKDPLKQKQLLKGLVQLSEEGAVQVFRPISNNDLIVGAVGVLQFDVVVARLKSEYNVEAIYESVNVATARWVESADAKKFEEFKRKNETQLALDGGDNLTYIAPTMVNLNLTQERYPDVQFRKTREH.

The tr-type G domain maps to 11–280 (AKRRTFAIIS…GLVAWAPAPM (270 aa)). Residues 20-27 (SHPDAGKT), 88-92 (DTPGH), and 142-145 (NKLD) each bind GTP.

This sequence belongs to the TRAFAC class translation factor GTPase superfamily. Classic translation factor GTPase family. PrfC subfamily.

Its subcellular location is the cytoplasm. Increases the formation of ribosomal termination complexes and stimulates activities of RF-1 and RF-2. It binds guanine nucleotides and has strong preference for UGA stop codons. It may interact directly with the ribosome. The stimulation of RF-1 and RF-2 is significantly reduced by GTP and GDP, but not by GMP. The sequence is that of Peptide chain release factor 3 from Salmonella gallinarum (strain 287/91 / NCTC 13346).